A 730-amino-acid chain; its full sequence is MGRRKKMVERVTALMSNPVMIRNIAIIAHIDHGKTTLSDNLLAGAGMISKDLAGRQLFMDSDEEEQERGITIDSANVSMVHEFEDEEYLINLIDTPGHVDFGGDVTRAMRAVDGAVVVIDAVEGTMPQTETVLRQALKEHVRPVLFINKVDRLINELQVDAQEMQIRLGKLIDHVNKLIKGMNEERYNQGWRVDAAEGTVAFGSALYNWAISVPMMQKTGVSFGEVFDYCRAEDMKSLGEKCPLHEAVNDMVIRFLPSPIDAQEDRVGVIWHGDLEAGIGKQMAVADATGDLAFMVTDISMDPHAGEVSTGRLFSGSLSRGMEVYVSGAAKPNRIQQVGVFMGPERLEVDKIPAGNIAAVTGLRDAIVGSTVTTLDGMSPFESIRHASEPVVTVAVEAKHMKDLPKLVEVLRQVAKEDPTLKITLDEETGEHLMAGMGELHLEVIAHRIERDKGVEISTTPPIVVYRETITGTAGPVEGKSPNRHNRFYVVVEPLEPEVRELIREGEISMRMPELERREKLIAAGLDKDEAKRIADIFESNAYFDMTKGIQHLNETMELVLEGFVEVMKAGPLSKEPCMGVKVKLMDAKLHEDAVHRGPAQVIPASRQAIQAAMLMADDTLFEPYQKVFIQTPQEQMGGATKEIQGRRGIIIDMTSEGDTTIIESKAPVSELFGFAGDIRSATEGRAMWSTEFVGFEPLPTNMITEVVSGIRERKGLKKDLPQAQDFMSM.

The tr-type G domain maps to 19-260; that stretch reads VMIRNIAIIA…MVIRFLPSPI (242 aa). Residues 28 to 35, 94 to 98, and 148 to 151 contribute to the GTP site; these read AHIDHGKT, DTPGH, and NKVD. The residue at position 596 (His-596) is a Diphthamide.

It belongs to the TRAFAC class translation factor GTPase superfamily. Classic translation factor GTPase family. EF-G/EF-2 subfamily.

The protein resides in the cytoplasm. Its function is as follows. Catalyzes the GTP-dependent ribosomal translocation step during translation elongation. During this step, the ribosome changes from the pre-translocational (PRE) to the post-translocational (POST) state as the newly formed A-site-bound peptidyl-tRNA and P-site-bound deacylated tRNA move to the P and E sites, respectively. Catalyzes the coordinated movement of the two tRNA molecules, the mRNA and conformational changes in the ribosome. This chain is Elongation factor 2 (fusA), found in Methanococcoides methylutens.